Here is a 421-residue protein sequence, read N- to C-terminus: MTVAEVKGTFKLVCLGCRVNQYEVQAYRDQLTILGYQEVLDSEIPADLCIINTCAVTASAESSGRHAVRQLCRQNPTAHIVVTGCLGESDKEFFASLDRQCTLVSNKEKSRLIEKIFSYDTTFPEFKIHSFEGKSRAFIKVQDGCNSFCSYCIIPYLRGRSVSRPAEKILAEIAGVVDQGYREVVIAGINVGDYCDGERSLASLIEQVDQIPGIERIRISSIDPDDITEDLHRAITSSRHTCPSSHLVLQSGSNSILKRMNRKYSRGDFLDCVEKFRASDPRYAFTTDVIVGFPGESDQDFEDTLRIIEDVGFIKVHSFPFSARRRTKAYTFDNQIPNQVIYERKKYLAEVAKRVGQKEMMKRLGETTEVLVEKVTGQVATGHSPYFEKVSFPVVGTVAINTLVSVRLDRVEEEGLIGEIV.

In terms of domain architecture, MTTase N-terminal spans 8-121 (GTFKLVCLGC…LIEKIFSYDT (114 aa)). [4Fe-4S] cluster is bound by residues cysteine 17, cysteine 54, cysteine 85, cysteine 145, cysteine 149, and cysteine 152. The 228-residue stretch at 131-358 (FEGKSRAFIK…AEVAKRVGQK (228 aa)) folds into the Radical SAM core domain.

It belongs to the methylthiotransferase family. MtaB subfamily. Requires [4Fe-4S] cluster as cofactor.

The protein localises to the cytoplasm. It catalyses the reaction N(6)-L-threonylcarbamoyladenosine(37) in tRNA + (sulfur carrier)-SH + AH2 + 2 S-adenosyl-L-methionine = 2-methylsulfanyl-N(6)-L-threonylcarbamoyladenosine(37) in tRNA + (sulfur carrier)-H + 5'-deoxyadenosine + L-methionine + A + S-adenosyl-L-homocysteine + 2 H(+). Catalyzes the methylthiolation of N6-threonylcarbamoyladenosine (t(6)A), leading to the formation of 2-methylthio-N6-threonylcarbamoyladenosine (ms(2)t(6)A) at position 37 in tRNAs that read codons beginning with adenine. In Chlamydia pneumoniae (Chlamydophila pneumoniae), this protein is Threonylcarbamoyladenosine tRNA methylthiotransferase MtaB (mtaB).